A 357-amino-acid polypeptide reads, in one-letter code: Homoarginine-6-hydroxylase 2-ODD-C23.2 (357 aa).

Residues 208–308 enclose the Fe2OG dioxygenase domain; it reads PFWVMRIIGY…RVCVAFFYET (101 aa). Positions 231, 233, and 289 each coordinate Fe cation. R299 lines the 2-oxoglutarate pocket.

It belongs to the iron/ascorbate-dependent oxidoreductase family. Fe(2+) serves as cofactor. Expressed in senescent leaves.

The protein localises to the cytoplasm. Its subcellular location is the cytosol. The catalysed reaction is L-homoarginine + 2-oxoglutarate + O2 = 6-hydroxy-L-homoarginine + succinate + CO2. The enzyme catalyses L-arginine + 2-oxoglutarate + O2 = 5-hydroxy-L-arginine + succinate + CO2. Slightly inhibited by canavanine (Can), the 5-oxa-analog of arginine. In terms of biological role, 2-oxoglutarate-dependent dioxygenase catalyzing homoarginine 6-hydroxylation and arginine-5-hydroxylation thus producing 6-hydroxy-L-homoarginine and 5-hydroxy-L-arginine, respectively. Guanidine (Gd) is in turn synthesized by the spontaneous conversion of 6-hydroxy-L-homoarginine and 5-hydroxy-L-arginine to (S)-2-amino-6-oxohexanoate (RHEA:79843) and L-glutamate 5-semialdehyde (RHEA:31527); guanidine is a nitrogen-rich compound that may serve as a defense or signaling substance. This is Homoarginine-6-hydroxylase 2-ODD-C23.2 from Arabidopsis thaliana (Mouse-ear cress).